Here is a 290-residue protein sequence, read N- to C-terminus: MLKVVLITGISGSGKSVALRMLEDAGYTCIDNLPVRFLSEFVAGARDDGLERVAIAIDVRSPGELAELPGVITAMRAMGTSLRVVFLDANTHTLAQRYSESRRRHPLTDRLSRGGQTPSLLDCIALERDLLAPLRDQEHVIDTSDLTPGQLRAWIRDLVQADRPPLVLTFESFAYKRGVPSDADLVFDVRCLPNPYYDRTLRPLTGRDEPVATWLAGFEIVGQMIDDIAGYLRRWLPQYTQDTRNYLTVAIGCTGGQHRSVYVVEQLALRFAEHDPLLVRHRTQLPDEST.

9-16 (GISGSGKS) contacts ATP. Position 58–61 (58–61 (DVRS)) interacts with GTP.

The protein belongs to the RapZ-like family.

Functionally, displays ATPase and GTPase activities. This chain is Nucleotide-binding protein Bpet0443, found in Bordetella petrii (strain ATCC BAA-461 / DSM 12804 / CCUG 43448).